The following is a 366-amino-acid chain: Probable dual-specificity RNA methyltransferase RlmN (366 aa).

Glutamate 108 acts as the Proton acceptor in catalysis. The Radical SAM core domain maps to 114–352 (YSDRSTLCIS…CTVRDTKGQE (239 aa)). Cysteine 121 and cysteine 357 are disulfide-bonded. Positions 128, 132, and 135 each coordinate [4Fe-4S] cluster. Residues 178–179 (GE), serine 212, 235–237 (SLH), and asparagine 314 each bind S-adenosyl-L-methionine. Cysteine 357 (S-methylcysteine intermediate) is an active-site residue.

It belongs to the radical SAM superfamily. RlmN family. It depends on [4Fe-4S] cluster as a cofactor.

The protein localises to the cytoplasm. The catalysed reaction is adenosine(2503) in 23S rRNA + 2 reduced [2Fe-2S]-[ferredoxin] + 2 S-adenosyl-L-methionine = 2-methyladenosine(2503) in 23S rRNA + 5'-deoxyadenosine + L-methionine + 2 oxidized [2Fe-2S]-[ferredoxin] + S-adenosyl-L-homocysteine. It catalyses the reaction adenosine(37) in tRNA + 2 reduced [2Fe-2S]-[ferredoxin] + 2 S-adenosyl-L-methionine = 2-methyladenosine(37) in tRNA + 5'-deoxyadenosine + L-methionine + 2 oxidized [2Fe-2S]-[ferredoxin] + S-adenosyl-L-homocysteine. Specifically methylates position 2 of adenine 2503 in 23S rRNA and position 2 of adenine 37 in tRNAs. The chain is Probable dual-specificity RNA methyltransferase RlmN from Corynebacterium glutamicum (strain ATCC 13032 / DSM 20300 / JCM 1318 / BCRC 11384 / CCUG 27702 / LMG 3730 / NBRC 12168 / NCIMB 10025 / NRRL B-2784 / 534).